Here is a 219-residue protein sequence, read N- to C-terminus: Small ribosomal subunit protein uS3 (219 aa).

The 70-residue stretch at 38–107 folds into the KH type-2 domain; sequence IREYIENKMK…RVHINVVEVK (70 aa).

The protein belongs to the universal ribosomal protein uS3 family. As to quaternary structure, part of the 30S ribosomal subunit. Forms a tight complex with proteins S10 and S14.

Functionally, binds the lower part of the 30S subunit head. Binds mRNA in the 70S ribosome, positioning it for translation. This is Small ribosomal subunit protein uS3 from Exiguobacterium sp. (strain ATCC BAA-1283 / AT1b).